The following is a 275-amino-acid chain: Elongation factor Ts (275 aa).

An involved in Mg(2+) ion dislocation from EF-Tu region spans residues T76–V79.

The protein belongs to the EF-Ts family.

The protein localises to the cytoplasm. Associates with the EF-Tu.GDP complex and induces the exchange of GDP to GTP. It remains bound to the aminoacyl-tRNA.EF-Tu.GTP complex up to the GTP hydrolysis stage on the ribosome. The protein is Elongation factor Ts of Corynebacterium kroppenstedtii (strain DSM 44385 / JCM 11950 / CIP 105744 / CCUG 35717).